A 238-amino-acid polypeptide reads, in one-letter code: Sugar fermentation stimulation protein homolog (238 aa).

This sequence belongs to the SfsA family.

The sequence is that of Sugar fermentation stimulation protein homolog from Alteromonas mediterranea (strain DSM 17117 / CIP 110805 / LMG 28347 / Deep ecotype).